Here is a 103-residue protein sequence, read N- to C-terminus: MYAVIKTGGKQYKVAVGEKLKVEQIPADIDAEITLDQVLAVGEGESIKFGTPLVSGASVKATVVSQGRHKKVTIFKMRRRKHYQKHGGHRQNYTELRIDAINA.

The protein belongs to the bacterial ribosomal protein bL21 family. As to quaternary structure, part of the 50S ribosomal subunit. Contacts protein L20.

In terms of biological role, this protein binds to 23S rRNA in the presence of protein L20. This chain is Large ribosomal subunit protein bL21, found in Paraburkholderia phymatum (strain DSM 17167 / CIP 108236 / LMG 21445 / STM815) (Burkholderia phymatum).